A 322-amino-acid chain; its full sequence is NADH-quinone oxidoreductase subunit H (322 aa).

The next 8 helical transmembrane spans lie at 12 to 32 (IGKA…MSFI), 79 to 99 (IFIL…AVVP), 111 to 131 (VGLL…LFAG), 151 to 171 (LSYE…TGSF), 183 to 203 (LWNV…GVAV), 234 to 254 (FFVG…TLFF), 262 to 282 (LPPF…FILL), and 301 to 321 (VCLP…LMNV).

Belongs to the complex I subunit 1 family. NDH-1 is composed of 13 different subunits. Subunits NuoA, H, J, K, L, M, N constitute the membrane sector of the complex.

Its subcellular location is the cell inner membrane. It catalyses the reaction a quinone + NADH + 5 H(+)(in) = a quinol + NAD(+) + 4 H(+)(out). NDH-1 shuttles electrons from NADH, via FMN and iron-sulfur (Fe-S) centers, to quinones in the respiratory chain. The immediate electron acceptor for the enzyme in this species is believed to be ubiquinone. Couples the redox reaction to proton translocation (for every two electrons transferred, four hydrogen ions are translocated across the cytoplasmic membrane), and thus conserves the redox energy in a proton gradient. This subunit may bind ubiquinone. The protein is NADH-quinone oxidoreductase subunit H of Shewanella oneidensis (strain ATCC 700550 / JCM 31522 / CIP 106686 / LMG 19005 / NCIMB 14063 / MR-1).